Consider the following 186-residue polypeptide: Large ribosomal subunit protein uL22 (186 aa).

The tract at residues 161-186 (VDDEPAKKKLSKKKLQRQKEKMLRSE) is disordered. Positions 177–186 (RQKEKMLRSE) are enriched in basic and acidic residues.

Belongs to the universal ribosomal protein uL22 family.

The protein is Large ribosomal subunit protein uL22 (RpL17) of Drosophila pseudoobscura pseudoobscura (Fruit fly).